The chain runs to 151 residues: Ribosome maturation factor RimP (151 aa).

Belongs to the RimP family.

It localises to the cytoplasm. Functionally, required for maturation of 30S ribosomal subunits. In Aliivibrio salmonicida (strain LFI1238) (Vibrio salmonicida (strain LFI1238)), this protein is Ribosome maturation factor RimP.